The chain runs to 166 residues: Transcription antitermination protein NusB (166 aa).

Over residues 1–18 the composition is skewed to basic and acidic residues; sequence MISDESDRFNPRDPKPAD. Residues 1-30 form a disordered region; that stretch reads MISDESDRFNPRDPKPADAGKPSKSAKRRE.

The protein belongs to the NusB family.

Its function is as follows. Involved in transcription antitermination. Required for transcription of ribosomal RNA (rRNA) genes. Binds specifically to the boxA antiterminator sequence of the ribosomal RNA (rrn) operons. In Pseudomonas fluorescens (strain Pf0-1), this protein is Transcription antitermination protein NusB.